The following is a 226-amino-acid chain: Probable proteasome subunit beta type-1 (226 aa).

The propeptide at 1–24 is removed in mature form; it reads MATTVKDTMNVDINAIKKGEIRMG. The active-site Nucleophile is the T25.

It belongs to the peptidase T1B family. In terms of assembly, the 26S proteasome consists of a 20S proteasome core and two 19S regulatory subunits. The 20S proteasome core is composed of 28 subunits that are arranged in four stacked rings, resulting in a barrel-shaped structure. The two end rings are each formed by seven alpha subunits, and the two central rings are each formed by seven beta subunits. The catalytic chamber with the active sites is on the inside of the barrel.

The protein resides in the cytoplasm. It localises to the nucleus. It catalyses the reaction Cleavage of peptide bonds with very broad specificity.. The proteasome is a multicatalytic proteinase complex which is characterized by its ability to cleave peptides with Arg, Phe, Tyr, Leu, and Glu adjacent to the leaving group at neutral or slightly basic pH. The proteasome has an ATP-dependent proteolytic activity. The sequence is that of Probable proteasome subunit beta type-1 (pre3) from Schizosaccharomyces pombe (strain 972 / ATCC 24843) (Fission yeast).